Consider the following 974-residue polypeptide: Hexokinase-1 (974 aa).

The segment at 1–42 (MGWGAPLLSRMLHGPGQAGETSPVPERQSGSENPASEDRRPL) is disordered. Residues 57-66 (CQRGQAVDVE) form a mitochondrial-binding peptide (MBP) region. Hexokinase domains follow at residues 72–514 (PLTE…MVTA) and 520–962 (AEQH…LITA). Residues arginine 86 and 140–145 (DLGGSS) each bind ATP. A hexokinase small subdomain 1 region spans residues 129 to 263 (DGSEKGDFIA…DYDANIVAVV (135 aa)). 140–147 (DLGGSSFR) is a D-glucose 6-phosphate binding site. Residues serine 211, 228–229 (TK), and 264–265 (ND) each bind D-glucose. The interval 264–503 (NDTVGTMMTC…SDVRFLLSES (240 aa)) is hexokinase large subdomain 1. Aspartate 265 and threonine 288 together coordinate D-glucose 6-phosphate. Residues asparagine 291, glutamate 316, and 347–350 (QLFE) each bind D-glucose. Serine 393 bears the Phosphoserine mark. 469-471 (DGS) lines the D-glucose 6-phosphate pocket. 481–482 (RR) contributes to the ATP binding site. D-glucose 6-phosphate contacts are provided by residues serine 505 and 588-592 (DLGGT). The tract at residues 577-711 (DGTEHGDFLA…EFDLDVVAVV (135 aa)) is hexokinase small subdomain 2. 588-593 (DLGGTN) serves as a coordination point for ATP. D-glucose-binding positions include 659 to 660 (SF), 676 to 677 (TK), and 712 to 713 (ND). The segment at 712 to 951 (NDTVGTMMTC…CTVSFLLSED (240 aa)) is hexokinase large subdomain 2. 2 residues coordinate D-glucose 6-phosphate: aspartate 713 and threonine 736. ATP is bound at residue threonine 736. Residues 738–739 (SN), glutamate 764, and glutamate 798 contribute to the D-glucose site. Residues 803–804 (GM), 840–844 (TKFLS), and 919–923 (TLYKL) each bind ATP. D-glucose 6-phosphate contacts are provided by residues 917–919 (DGT) and serine 953.

This sequence belongs to the hexokinase family. Monomer. Interacts with RABL2/RABL2A; binds preferentially to GTP-bound RABL2. Interacts with VDAC1. The HK1-VDAC1 complex interacts with ATF2. Interacts (via N-terminal spermatogenic cell-specific region) with PFKM isoform 2 and isoform 3 (via C-terminus). Interacts with SMAD5. Post-translationally, tyrosine-phosphorylated. In rapidly growing tumor cells exhibiting high glucose catabolic rates, isoform HK1 is markedly elevated. Isoform HK1-SA, isoform HK1-SB and isoform HK1-SC are found only in spermatogenic cells. Isoform HK1-SC is detected in round spermatids, condensing spermatids and mature sperm where it is found in the head membranes, mitochondria of the midpiece and the fibrous sheath of the flagellum. Expressed within the principal piece and midpiece of sperm tail (at protein level).

The protein resides in the mitochondrion outer membrane. It localises to the cytoplasm. It is found in the cytosol. Its subcellular location is the membrane. The enzyme catalyses a D-hexose + ATP = a D-hexose 6-phosphate + ADP + H(+). It carries out the reaction D-fructose + ATP = D-fructose 6-phosphate + ADP + H(+). It catalyses the reaction D-glucose + ATP = D-glucose 6-phosphate + ADP + H(+). The catalysed reaction is D-mannose + ATP = D-mannose 6-phosphate + ADP + H(+). The enzyme catalyses D-glucosamine + ATP = D-glucosamine 6-phosphate + ADP + H(+). Its pathway is carbohydrate metabolism; hexose metabolism. The protein operates within carbohydrate degradation; glycolysis; D-glyceraldehyde 3-phosphate and glycerone phosphate from D-glucose: step 1/4. Hexokinase is an allosteric enzyme inhibited by its product D-glucose 6-phosphate. Hexokinase activity is inhibited by N-acetyl-D-glucosamine. Its function is as follows. Catalyzes the phosphorylation of various hexoses, such as D-glucose, D-glucosamine, D-fructose, D-mannose and 2-deoxy-D-glucose, to hexose 6-phosphate (D-glucose 6-phosphate, D-glucosamine 6-phosphate, D-fructose 6-phosphate, D-mannose 6-phosphate and 2-deoxy-D-glucose 6-phosphate, respectively). Does not phosphorylate N-acetyl-D-glucosamine. Mediates the initial step of glycolysis by catalyzing phosphorylation of D-glucose to D-glucose 6-phosphate. Involved in innate immunity and inflammation by acting as a pattern recognition receptor for bacterial peptidoglycan. When released in the cytosol, N-acetyl-D-glucosamine component of bacterial peptidoglycan inhibits the hexokinase activity of HK1 and causes its dissociation from mitochondrial outer membrane, thereby activating the NLRP3 inflammasome. In Mus musculus (Mouse), this protein is Hexokinase-1.